The chain runs to 53 residues: Conotoxin Cal22e (53 aa).

A propeptide spanning residues 1-5 is cleaved from the precursor; sequence GRPSA.

In terms of processing, contains 4 disulfide bonds. In terms of tissue distribution, expressed by the venom duct.

It is found in the secreted. In terms of biological role, probable neurotoxin with unknown target. Possibly targets ion channels. This is Conotoxin Cal22e from Californiconus californicus (California cone).